The sequence spans 168 residues: Translationally-controlled tumor protein homolog (168 aa).

Positions 1 to 168 constitute a TCTP domain; sequence MLLYKDVISG…FKDGLVSEKF (168 aa). Ser78 is subject to Phosphoserine.

It belongs to the TCTP family.

It localises to the cytoplasm. Functionally, involved in calcium binding and microtubule stabilization. May be a guanine nucleotide-free chaperone (GFC). This Schizosaccharomyces pombe (strain 972 / ATCC 24843) (Fission yeast) protein is Translationally-controlled tumor protein homolog (p23fy).